Here is a 597-residue protein sequence, read N- to C-terminus: 2-isopropylmalate synthase (597 aa).

Residues 1–80 (MQLDIDRLVA…QKNESLERTE (80 aa)) form a unknown region. In terms of domain architecture, Pyruvate carboxyltransferase spans 87-349 (VIIFDTTLRD…ETGIDTTQIV (263 aa)). Positions 87 to 349 (VIIFDTTLRD…ETGIDTTQIV (263 aa)) are 2-isopropylmalate synthase. The Mn(2+) site is built by D96, H284, H286, and N320. The regulatory domain stretch occupies residues 475 to 597 (KFISQKISTE…KPKAQGSGTI (123 aa)).

The protein belongs to the alpha-IPM synthase/homocitrate synthase family. LeuA type 1 subfamily. As to quaternary structure, homodimer. Mn(2+) serves as cofactor.

The protein localises to the cytoplasm. It catalyses the reaction 3-methyl-2-oxobutanoate + acetyl-CoA + H2O = (2S)-2-isopropylmalate + CoA + H(+). It functions in the pathway amino-acid biosynthesis; L-leucine biosynthesis; L-leucine from 3-methyl-2-oxobutanoate: step 1/4. Functionally, catalyzes the condensation of the acetyl group of acetyl-CoA with 3-methyl-2-oxobutanoate (2-ketoisovalerate) to form 3-carboxy-3-hydroxy-4-methylpentanoate (2-isopropylmalate). This is 2-isopropylmalate synthase from Neisseria gonorrhoeae (strain ATCC 700825 / FA 1090).